The following is a 116-amino-acid chain: Large ribosomal subunit protein uL18 (116 aa).

Belongs to the universal ribosomal protein uL18 family. Part of the 50S ribosomal subunit; part of the 5S rRNA/L5/L18/L25 subcomplex. Contacts the 5S and 23S rRNAs.

Functionally, this is one of the proteins that bind and probably mediate the attachment of the 5S RNA into the large ribosomal subunit, where it forms part of the central protuberance. In Teredinibacter turnerae (strain ATCC 39867 / T7901), this protein is Large ribosomal subunit protein uL18.